Reading from the N-terminus, the 79-residue chain is MAKIGVESSLTDVQQALQQKGHEVISLQSESDAKECDCCVITGQDSNVMGISDVSTKGSVIKASGLTTDEICQQVESRV.

It belongs to the UPF0180 family.

This chain is UPF0180 protein Bcer98_1118, found in Bacillus cytotoxicus (strain DSM 22905 / CIP 110041 / 391-98 / NVH 391-98).